The primary structure comprises 671 residues: DNA ligase (671 aa).

Residues 36 to 40, 85 to 86, and Glu-116 each bind NAD(+); these read DAEYD and SL. The active-site N6-AMP-lysine intermediate is Lys-118. Residues Arg-139, Glu-176, Lys-292, and Lys-316 each contribute to the NAD(+) site. Residues Cys-410, Cys-413, Cys-428, and Cys-434 each coordinate Zn(2+). Positions 591–671 constitute a BRCT domain; the sequence is QKGGRFQGMT…QFLAMFSEKE (81 aa).

The protein belongs to the NAD-dependent DNA ligase family. LigA subfamily. Mg(2+) is required as a cofactor. Requires Mn(2+) as cofactor.

It catalyses the reaction NAD(+) + (deoxyribonucleotide)n-3'-hydroxyl + 5'-phospho-(deoxyribonucleotide)m = (deoxyribonucleotide)n+m + AMP + beta-nicotinamide D-nucleotide.. Functionally, DNA ligase that catalyzes the formation of phosphodiester linkages between 5'-phosphoryl and 3'-hydroxyl groups in double-stranded DNA using NAD as a coenzyme and as the energy source for the reaction. It is essential for DNA replication and repair of damaged DNA. The sequence is that of DNA ligase from Acidithiobacillus ferrooxidans (strain ATCC 23270 / DSM 14882 / CIP 104768 / NCIMB 8455) (Ferrobacillus ferrooxidans (strain ATCC 23270)).